The following is a 486-amino-acid chain: Cobyric acid synthase (486 aa).

The GATase cobBQ-type domain occupies 250 to 438 (AFRIVVPVPP…LHGMFDTPSA (189 aa)). The Nucleophile role is filled by C331. Residue H430 is part of the active site.

This sequence belongs to the CobB/CobQ family. CobQ subfamily.

The protein operates within cofactor biosynthesis; adenosylcobalamin biosynthesis. Its function is as follows. Catalyzes amidations at positions B, D, E, and G on adenosylcobyrinic A,C-diamide. NH(2) groups are provided by glutamine, and one molecule of ATP is hydrogenolyzed for each amidation. This chain is Cobyric acid synthase, found in Herminiimonas arsenicoxydans.